Consider the following 555-residue polypeptide: Glutamate--tRNA ligase (555 aa).

Positions 100–110 match the 'HIGH' region motif; that stretch reads PNPSGPLHIGH.

It belongs to the class-I aminoacyl-tRNA synthetase family. Glutamate--tRNA ligase type 2 subfamily.

It is found in the cytoplasm. It carries out the reaction tRNA(Glu) + L-glutamate + ATP = L-glutamyl-tRNA(Glu) + AMP + diphosphate. Its function is as follows. Catalyzes the attachment of glutamate to tRNA(Glu) in a two-step reaction: glutamate is first activated by ATP to form Glu-AMP and then transferred to the acceptor end of tRNA(Glu). The protein is Glutamate--tRNA ligase of Methanococcus maripaludis (strain C5 / ATCC BAA-1333).